The following is a 202-amino-acid chain: Superoxide dismutase [Mn] (202 aa).

Residues His-27, His-82, Asp-164, and His-168 each coordinate Mn(2+).

Belongs to the iron/manganese superoxide dismutase family. As to quaternary structure, homodimer. The cofactor is Mn(2+).

It catalyses the reaction 2 superoxide + 2 H(+) = H2O2 + O2. Its function is as follows. Destroys superoxide anion radicals which are normally produced within the cells and which are toxic to biological systems. In Listeria ivanovii, this protein is Superoxide dismutase [Mn] (sodA).